The chain runs to 746 residues: Protein C-mannosyl-transferase DPY19L1 (746 aa).

The disordered stretch occupies residues 1–68 (MVLQARSKHR…RAGTAAPAPD (68 aa)). Phosphoserine occurs at positions 28 and 31. Over residues 59–68 (RAGTAAPAPD) the composition is skewed to low complexity. Helical transmembrane passes span 137 to 159 (LYYS…WMIM), 227 to 247 (ACFY…LFFI), 257 to 279 (LGGV…VMWT), 307 to 325 (LCRG…FMLP), 331 to 350 (FVLL…GYID), 357 to 374 (IIYM…LMFG), 380 to 396 (TSYY…MLAM), 405 to 425 (VSEL…TVIL), 481 to 501 (LLLP…FNDM), 520 to 540 (GELV…VLIM), and 562 to 582 (LFGW…ILAA).

Belongs to the dpy-19 family.

Its subcellular location is the endoplasmic reticulum membrane. It catalyses the reaction L-tryptophyl-[protein] + a di-trans,poly-cis-dolichyl beta-D-mannosyl phosphate = C-alpha-D-mannosyl-L-tryptophyl-[protein] + a di-trans,poly-cis-dolichyl phosphate + H(+). It participates in protein modification; protein glycosylation. Functionally, C-mannosyltransferase that mediates the C-mannosylation tryptophan residues on target proteins. The reaction occurs on the luminal side of the endoplasmic reticulum and involves the transfer of a mannose unit from a dolichylphosphate mannose (Dol-P-Man) donor to an acceptor protein containing a WxxW consensus sequence. C-mannosylates the first two tryptophans in the WxxWxxWxxC sequence motif in thrombospondin (TSP) type-1 repeats of UNC5A. Regulates neurite extension during development. This Mus musculus (Mouse) protein is Protein C-mannosyl-transferase DPY19L1 (Dpy19l1).